The following is a 120-amino-acid chain: Large ribosomal subunit protein bL17 (120 aa).

This sequence belongs to the bacterial ribosomal protein bL17 family. As to quaternary structure, part of the 50S ribosomal subunit. Contacts protein L32.

This is Large ribosomal subunit protein bL17 from Anoxybacillus flavithermus (strain DSM 21510 / WK1).